We begin with the raw amino-acid sequence, 84 residues long: Large ribosomal subunit protein bL28 (84 aa).

It belongs to the bacterial ribosomal protein bL28 family.

The chain is Large ribosomal subunit protein bL28 from Clostridium perfringens (strain 13 / Type A).